Here is a 195-residue protein sequence, read N- to C-terminus: Imidazoleglycerol-phosphate dehydratase (195 aa).

This sequence belongs to the imidazoleglycerol-phosphate dehydratase family.

The protein resides in the cytoplasm. It carries out the reaction D-erythro-1-(imidazol-4-yl)glycerol 3-phosphate = 3-(imidazol-4-yl)-2-oxopropyl phosphate + H2O. The protein operates within amino-acid biosynthesis; L-histidine biosynthesis; L-histidine from 5-phospho-alpha-D-ribose 1-diphosphate: step 6/9. The polypeptide is Imidazoleglycerol-phosphate dehydratase (Cereibacter sphaeroides (strain ATCC 17023 / DSM 158 / JCM 6121 / CCUG 31486 / LMG 2827 / NBRC 12203 / NCIMB 8253 / ATH 2.4.1.) (Rhodobacter sphaeroides)).